Here is a 250-residue protein sequence, read N- to C-terminus: Cysteine proteinase inhibitor 12 (250 aa).

Positions Met-1 to Ala-32 are cleaved as a signal peptide. 2 consecutive Cystatin domains span residues Gly-49–Gly-137 and Pro-156–Val-202. Residues Gln-93–Gly-97 carry the Secondary area of contact motif.

It belongs to the cystatin family. Phytocystatin subfamily.

The protein resides in the secreted. Functionally, specific inhibitor of cysteine proteinases. Probably involved in the regulation of endogenous processes and in defense against pests and pathogens. This is Cysteine proteinase inhibitor 12 from Oryza sativa subsp. japonica (Rice).